The chain runs to 364 residues: Nucleoporin SEH1 (364 aa).

WD repeat units follow at residues 10 to 49 (DHKDLIHDVSYDFHGRRMATCSSDQSVKVWDKGDDGEWHC), 55 to 96 (THSG…SNDK), 111 to 152 (DSRT…NLSQ), 160 to 210 (SCKL…RKYA), 217 to 258 (TVTD…RESA), and 276 to 315 (SHNSQVWRVSWNITSTLLASSGDDGCVRLWKANYMDNWKC).

This sequence belongs to the WD repeat SEC13 family. Component of the Nup107-160 subcomplex of the nuclear pore complex (NPC). The Nup107-160 subcomplex includes NUP160, NUP133, NUP107, NUP98, NUP85, NUP43, NUP37, SEH1 and SEC13. Component of the GATOR2 subcomplex, composed of MIOS, SEC13, SEH1L, WDR24 and WDR59. The GATOR2 complex interacts with CASTOR1 and CASTOR2; the interaction is negatively regulated by arginine. The GATOR2 complex interacts with SESN1, SESN2 and SESN3; the interaction is negatively regulated by amino acids.

The protein localises to the chromosome. It is found in the centromere. The protein resides in the kinetochore. It localises to the nucleus. Its subcellular location is the nuclear pore complex. The protein localises to the lysosome membrane. With respect to regulation, the GATOR2 complex is negatively regulated by the upstream amino acid sensors CASTOR1 and SESN2, which sequester the GATOR2 complex in absence of amino acids. In the presence of abundant amino acids, GATOR2 is released from CASTOR1 and SESN2 and activated. Functionally, component of the Nup107-160 subcomplex of the nuclear pore complex (NPC). The Nup107-160 subcomplex is required for the assembly of a functional NPC. The Nup107-160 subcomplex is also required for normal kinetochore microtubule attachment, mitotic progression and chromosome segregation. This subunit plays a role in recruitment of the Nup107-160 subcomplex to the kinetochore. In terms of biological role, as a component of the GATOR2 complex, functions as an activator of the amino acid-sensing branch of the mTORC1 signaling pathway. The GATOR2 complex indirectly activates mTORC1 through the inhibition of the GATOR1 subcomplex. GATOR2 probably acts as an E3 ubiquitin-protein ligase toward GATOR1. In the presence of abundant amino acids, the GATOR2 complex mediates ubiquitination of the NPRL2 core component of the GATOR1 complex, leading to GATOR1 inactivation. In the absence of amino acids, GATOR2 is inhibited, activating the GATOR1 complex. This Danio rerio (Zebrafish) protein is Nucleoporin SEH1 (seh1l).